The chain runs to 1404 residues: DNA-directed RNA polymerase subunit beta' (1404 aa).

Zn(2+) is bound by residues C70, C72, C85, and C88. Residues D460, D462, and D464 each contribute to the Mg(2+) site. Zn(2+) is bound by residues C814, C888, C895, and C898.

The protein belongs to the RNA polymerase beta' chain family. In terms of assembly, the RNAP catalytic core consists of 2 alpha, 1 beta, 1 beta' and 1 omega subunit. When a sigma factor is associated with the core the holoenzyme is formed, which can initiate transcription. Requires Mg(2+) as cofactor. Zn(2+) is required as a cofactor.

It catalyses the reaction RNA(n) + a ribonucleoside 5'-triphosphate = RNA(n+1) + diphosphate. Its function is as follows. DNA-dependent RNA polymerase catalyzes the transcription of DNA into RNA using the four ribonucleoside triphosphates as substrates. This is DNA-directed RNA polymerase subunit beta' from Shewanella pealeana (strain ATCC 700345 / ANG-SQ1).